The primary structure comprises 365 residues: Phosphatidylcholine:ceramide cholinephosphotransferase 2 (365 aa).

The segment at 9–50 is disordered; the sequence is LEGHLESQTNNSTNTYTSPTEAVEEEDKNGKGKPKTLSNGLR. Over residues 15–28 the composition is skewed to low complexity; that stretch reads SQTNNSTNTYTSPT. The next 5 membrane-spanning stretches (helical) occupy residues 80 to 100, 128 to 148, 159 to 179, 219 to 239, and 248 to 268; these read GIAF…ITVV, FSVS…QWLF, FFFI…VTTL, ILCG…TYLF, and FWWY…CILV. His229 is a catalytic residue. Catalysis depends on residues His272 and Asp276. Residues 273-290 form a helical membrane-spanning segment; it reads YTVDVIIAYYITTRLFWW. Residues 291 to 365 lie on the Cytoplasmic side of the membrane; the sequence is YHSMANEKNL…KIGEDNEKST (75 aa). 4 S-palmitoyl cysteine lipidation sites follow: Cys331, Cys332, Cys343, and Cys348.

It belongs to the sphingomyelin synthase family. Palmitoylated on Cys-331, Cys-332, Cys-343 and Cys-348; which plays an important role in plasma membrane localization. As to expression, expression restricted to late round spermatids and elongating spermatids but not detected in late elongate spermatids and Sertoli cells (at protein level).

The protein resides in the cell membrane. It localises to the golgi apparatus membrane. It catalyses the reaction an N-acylsphing-4-enine + a 1,2-diacyl-sn-glycero-3-phosphocholine = a sphingomyelin + a 1,2-diacyl-sn-glycerol. The enzyme catalyses an N-acylsphinganine + a 1,2-diacyl-sn-glycero-3-phosphocholine = an N-acylsphinganine-1-phosphocholine + a 1,2-diacyl-sn-glycerol. It carries out the reaction an N-acyl-(4R)-4-hydroxysphinganine + a 1,2-diacyl-sn-glycero-3-phosphocholine = an N-acyl-(4R)-4-hydroxysphinganine-phosphocholine + a 1,2-diacyl-sn-glycerol. The catalysed reaction is an N-acylsphing-4-enine + a 1,2-diacyl-sn-glycero-3-phosphoethanolamine = an N-acylsphing-4-enine 1-phosphoethanolamine + a 1,2-diacyl-sn-glycerol. It catalyses the reaction an N-acylsphinganine + a 1,2-diacyl-sn-glycero-3-phosphoethanolamine = an N-acylsphinganine-1-phosphoethanolamine + a 1,2-diacyl-sn-glycerol. The enzyme catalyses an N-acyl-(4R)-4-hydroxysphinganine + a 1,2-diacyl-sn-glycero-3-phosphoethanolamine = an N-acyl-(4R)-4-hydroxysphinganine-1-phosphoethanolamine + a 1,2-diacyl-sn-glycerol. It carries out the reaction 1,2-dihexadecanoyl-sn-glycero-3-phosphocholine + an N-acylsphing-4-enine = 1,2-dihexadecanoyl-sn-glycerol + a sphingomyelin. The catalysed reaction is 1-(9Z-octadecenoyl)-2-acyl-sn-3-glycerol + a sphingomyelin = a 1-(9Z-octadecenoyl)-2-acyl-sn-glycero-3-phosphocholine + an N-acylsphing-4-enine. It catalyses the reaction N-hexadecanoylsphinganine + a 1,2-diacyl-sn-glycero-3-phosphocholine = N-hexadecanoyl-sphinganine-1-phosphocholine + a 1,2-diacyl-sn-glycerol. The enzyme catalyses N-hexadecanoyl-(4R)-hydroxysphinganine + a 1,2-diacyl-sn-glycero-3-phosphocholine = N-hexadecanoyl-(4R)-hydroxysphinganine-phosphocholine + a 1,2-diacyl-sn-glycerol. It carries out the reaction N-hexadecanoylsphinganine + a 1,2-diacyl-sn-glycero-3-phosphoethanolamine = N-hexadecanoyl-sphinganine-1-phosphoethanolamine + a 1,2-diacyl-sn-glycerol. The catalysed reaction is N-hexadecanoyl-(4R)-hydroxysphinganine + a 1,2-diacyl-sn-glycero-3-phosphoethanolamine = N-hexadecanoyl-(4R)-hydroxysphinganine-1-phosphoethanolamine + a 1,2-diacyl-sn-glycerol. The protein operates within sphingolipid metabolism. Functionally, sphingomyelin synthase that primarily contributes to sphingomyelin synthesis and homeostasis at the plasma membrane. Catalyzes the reversible transfer of phosphocholine moiety in sphingomyelin biosynthesis: in the forward reaction transfers phosphocholine head group of phosphatidylcholine (PC) on to ceramide (CER) to form ceramide phosphocholine (sphingomyelin, SM) and diacylglycerol (DAG) as by-product, and in the reverse reaction transfers phosphocholine from SM to DAG to form PC and CER. The direction of the reaction appears to depend on the levels of CER and DAG in the plasma membrane. Does not use free phosphorylcholine or CDP-choline as donors. Can also transfer phosphoethanolamine head group of phosphatidylethanolamine (PE) on to ceramide (CER) to form ceramide phosphoethanolamine (CPE). Regulates receptor-mediated signal transduction via mitogenic DAG and proapoptotic CER, as well as via SM, a structural component of membrane rafts that serve as platforms for signal transduction and protein sorting. To a lesser extent, plays a role in secretory transport via regulation of DAG pool at the Golgi apparatus and its downstream effects on PRKD1. Required for normal bone matrix mineralization. This Rattus norvegicus (Rat) protein is Phosphatidylcholine:ceramide cholinephosphotransferase 2 (Sgms2).